Consider the following 377-residue polypeptide: Citrate synthase (377 aa).

Active-site residues include histidine 258 and aspartate 313.

This sequence belongs to the citrate synthase family. As to quaternary structure, homodimer. The N-terminus is blocked by acetylation.

The catalysed reaction is oxaloacetate + acetyl-CoA + H2O = citrate + CoA + H(+). It participates in carbohydrate metabolism; tricarboxylic acid cycle; isocitrate from oxaloacetate: step 1/2. Allosterically inhibited by NADH. The protein is Citrate synthase (gltA) of Saccharolobus solfataricus (strain ATCC 35092 / DSM 1617 / JCM 11322 / P2) (Sulfolobus solfataricus).